A 61-amino-acid chain; its full sequence is Temporin-MT3 (61 aa).

The first 22 residues, 1-22 (MFTLKKPLLLLFFLGTINLSLC), serve as a signal peptide directing secretion. A propeptide spans 23 to 44 (EQERNAEEERRDEPDERNAEVE) (removed in mature form). Leu-59 carries the leucine amide modification.

Belongs to the frog skin active peptide (FSAP) family. Temporin subfamily. As to expression, expressed by the skin glands.

It is found in the secreted. In terms of biological role, antimicrobial peptide. The sequence is that of Temporin-MT3 from Amolops mantzorum (Sichuan torrent frog).